Reading from the N-terminus, the 150-residue chain is Cytochrome c oxidase subunit 5A, mitochondrial (150 aa).

Residues 1–41 constitute a mitochondrion transit peptide; the sequence is MLGTALRRCAVAAASRAGPRGLQHPAPVPGPTAAIQSIRCY. The short motif at 2-17 is the SIFI-degron element; the sequence is LGTALRRCAVAAASRA. An N6-acetyllysine mark is found at Lys87 and Lys113. At Thr141 the chain carries Phosphothreonine.

The protein belongs to the cytochrome c oxidase subunit 5A family. In terms of assembly, component of the cytochrome c oxidase (complex IV, CIV), a multisubunit enzyme composed of 14 subunits. The complex is composed of a catalytic core of 3 subunits MT-CO1, MT-CO2 and MT-CO3, encoded in the mitochondrial DNA, and 11 supernumerary subunits COX4I, COX5A, COX5B, COX6A, COX6B, COX6C, COX7A, COX7B, COX7C, COX8 and NDUFA4, which are encoded in the nuclear genome. The complex exists as a monomer or a dimer and forms supercomplexes (SCs) in the inner mitochondrial membrane with NADH-ubiquinone oxidoreductase (complex I, CI) and ubiquinol-cytochrome c oxidoreductase (cytochrome b-c1 complex, complex III, CIII), resulting in different assemblies (supercomplex SCI(1)III(2)IV(1) and megacomplex MCI(2)III(2)IV(2)). Interacts with AFG1L. Interacts with RAB5IF. In terms of processing, in response to mitochondrial stress, the precursor protein is ubiquitinated by the SIFI complex in the cytoplasm before mitochondrial import, leading to its degradation. Within the SIFI complex, UBR4 initiates ubiquitin chain that are further elongated or branched by KCMF1.

It localises to the mitochondrion inner membrane. Its pathway is energy metabolism; oxidative phosphorylation. In terms of biological role, component of the cytochrome c oxidase, the last enzyme in the mitochondrial electron transport chain which drives oxidative phosphorylation. The respiratory chain contains 3 multisubunit complexes succinate dehydrogenase (complex II, CII), ubiquinol-cytochrome c oxidoreductase (cytochrome b-c1 complex, complex III, CIII) and cytochrome c oxidase (complex IV, CIV), that cooperate to transfer electrons derived from NADH and succinate to molecular oxygen, creating an electrochemical gradient over the inner membrane that drives transmembrane transport and the ATP synthase. Cytochrome c oxidase is the component of the respiratory chain that catalyzes the reduction of oxygen to water. Electrons originating from reduced cytochrome c in the intermembrane space (IMS) are transferred via the dinuclear copper A center (CU(A)) of subunit 2 and heme A of subunit 1 to the active site in subunit 1, a binuclear center (BNC) formed by heme A3 and copper B (CU(B)). The BNC reduces molecular oxygen to 2 water molecules using 4 electrons from cytochrome c in the IMS and 4 protons from the mitochondrial matrix. This Nycticebus coucang (Slow loris) protein is Cytochrome c oxidase subunit 5A, mitochondrial (COX5A).